A 79-amino-acid polypeptide reads, in one-letter code: Conotoxin Cl9.4 (79 aa).

The N-terminal stretch at 1–23 (MNCYLILTVALLLTSAMTGTTTA) is a signal peptide. The propeptide occupies 24-37 (GQLNKKGVTLREDD). 3 disulfide bridges follow: C41/C58, C46/C68, and C48/C73.

Expressed by the venom duct.

The protein resides in the secreted. The sequence is that of Conotoxin Cl9.4 from Californiconus californicus (California cone).